Here is a 796-residue protein sequence, read N- to C-terminus: Volume-regulated anion channel subunit LRRC8E (796 aa).

Over 1-22 (MIPVAEFKQFTEQQPAFKVLKP) the chain is Cytoplasmic. The helical transmembrane segment at 23–43 (WWDVLAEYLTVAMLMIGVFGC) threads the bilayer. Over 44 to 116 (TLQVTQDKII…YETALHWYAK (73 aa)) the chain is Extracellular. Cysteines 54 and 301 form a disulfide. N63 carries an N-linked (GlcNAc...) asparagine glycan. A helical transmembrane segment spans residues 117 to 137 (YFPYLVVIHTLIFMVCTSFWF). At 138–265 (KFPGTSSKIE…IRQTVLKVCK (128 aa)) the chain is on the cytoplasmic side. A helical transmembrane segment spans residues 266–286 (FLAILVYNLVYVEKISFLVAC). Residues 287–313 (RVETSEVTGYASFCCNHTKAHLFSKLA) are Extracellular-facing. Residue N302 is glycosylated (N-linked (GlcNAc...) asparagine). Residues 314-334 (FCYISFVCIYGLTCIYTLYWL) traverse the membrane as a helical segment. Residues 335–796 (FHRPLKEYSF…AEVRDKMEEE (462 aa)) lie on the Cytoplasmic side of the membrane. LRR repeat units lie at residues 508–529 (GLEE…ATLE), 536–557 (QLKV…TDVA), 559–579 (HLQR…NSLK), 583–604 (ALRE…VFSL), 606–627 (ALQE…LSFQ), 631–652 (KLVT…VRKL), 654–675 (SLEQ…LGLC), 677–698 (GLRL…VGLL), 700–721 (NLQH…LFFC), 723–744 (KLRT…VGAL), and 746–767 (ALSR…LGNC).

It belongs to the LRRC8 family. In terms of assembly, heterohexamer; oligomerizes with other LRRC8 proteins (LRRC8A, LRRC8C, LRRC8D and/or LRRC8B) to form a heterohexamer. In vivo, the subunit composition may depend primarily on expression levels, and heterooligomeric channels containing various proportions of the different LRRC8 proteins may coexist.

Its subcellular location is the cell membrane. The protein localises to the endoplasmic reticulum membrane. It is found in the lysosome membrane. The catalysed reaction is chloride(in) = chloride(out). It catalyses the reaction iodide(out) = iodide(in). The enzyme catalyses taurine(out) = taurine(in). It carries out the reaction 2',3'-cGAMP(out) = 2',3'-cGAMP(in). In terms of biological role, non-essential component of the volume-regulated anion channel (VRAC, also named VSOAC channel), an anion channel required to maintain a constant cell volume in response to extracellular or intracellular osmotic changes. The VRAC channel conducts iodide better than chloride and can also conduct organic osmolytes like taurine. Mediates efflux of amino acids, such as aspartate, in response to osmotic stress. The VRAC channel also mediates transport of immunoreactive cyclic dinucleotide GMP-AMP (2'-3'-cGAMP), an immune messenger produced in response to DNA virus in the cytosol. Channel activity requires LRRC8A plus at least one other family member (LRRC8B, LRRC8C, LRRC8D or LRRC8E); channel characteristics depend on the precise subunit composition. Also plays a role in lysosome homeostasis by forming functional lysosomal VRAC channels in response to low cytoplasmic ionic strength condition: lysosomal VRAC channels are necessary for the formation of large lysosome-derived vacuoles, which store and then expel excess water to maintain cytosolic water homeostasis. The polypeptide is Volume-regulated anion channel subunit LRRC8E (Homo sapiens (Human)).